A 95-amino-acid chain; its full sequence is Co-chaperonin GroES (95 aa).

Belongs to the GroES chaperonin family. Heptamer of 7 subunits arranged in a ring. Interacts with the chaperonin GroEL.

It localises to the cytoplasm. Together with the chaperonin GroEL, plays an essential role in assisting protein folding. The GroEL-GroES system forms a nano-cage that allows encapsulation of the non-native substrate proteins and provides a physical environment optimized to promote and accelerate protein folding. GroES binds to the apical surface of the GroEL ring, thereby capping the opening of the GroEL channel. The chain is Co-chaperonin GroES from Pelodictyon phaeoclathratiforme (strain DSM 5477 / BU-1).